Reading from the N-terminus, the 354-residue chain is Heme A synthase (354 aa).

A run of 8 helical transmembrane segments spans residues 21–41, 106–126, 139–159, 171–191, 212–232, 268–288, 304–324, and 326–346; these read VAVW…LGGL, VWGR…ALSG, VFLL…SGLV, AHLA…LDIL, MLGL…VAGL, VQFG…VGWF, AVGL…VMVV, and VWLA…CLWA. A heme-binding site is contributed by histidine 272. Residue histidine 332 participates in heme binding.

The protein belongs to the COX15/CtaA family. Type 2 subfamily. Interacts with CtaB. Heme b is required as a cofactor.

It is found in the cell membrane. It catalyses the reaction Fe(II)-heme o + 2 A + H2O = Fe(II)-heme a + 2 AH2. It functions in the pathway porphyrin-containing compound metabolism; heme A biosynthesis; heme A from heme O: step 1/1. Functionally, catalyzes the conversion of heme O to heme A by two successive hydroxylations of the methyl group at C8. The first hydroxylation forms heme I, the second hydroxylation results in an unstable dihydroxymethyl group, which spontaneously dehydrates, resulting in the formyl group of heme A. This Paramagnetospirillum magneticum (strain ATCC 700264 / AMB-1) (Magnetospirillum magneticum) protein is Heme A synthase.